The following is a 211-amino-acid chain: 3,4-dihydroxy-2-butanone 4-phosphate synthase (211 aa).

D-ribulose 5-phosphate-binding positions include 37 to 38 (RE), D42, 150 to 154 (RGGHT), and E174. A Mg(2+)-binding site is contributed by E38. H153 is a Mg(2+) binding site.

This sequence belongs to the DHBP synthase family. As to quaternary structure, homodimer. Mg(2+) serves as cofactor. Requires Mn(2+) as cofactor.

The enzyme catalyses D-ribulose 5-phosphate = (2S)-2-hydroxy-3-oxobutyl phosphate + formate + H(+). It functions in the pathway cofactor biosynthesis; riboflavin biosynthesis; 2-hydroxy-3-oxobutyl phosphate from D-ribulose 5-phosphate: step 1/1. In terms of biological role, catalyzes the conversion of D-ribulose 5-phosphate to formate and 3,4-dihydroxy-2-butanone 4-phosphate. In Baumannia cicadellinicola subsp. Homalodisca coagulata, this protein is 3,4-dihydroxy-2-butanone 4-phosphate synthase.